Reading from the N-terminus, the 556-residue chain is Urocanate hydratase (556 aa).

NAD(+)-binding positions include 52 to 53 (GG), Gln130, 176 to 178 (GMG), Glu196, Arg201, 242 to 243 (NA), 263 to 267 (QTSAH), 273 to 274 (YL), and Tyr322. The active site involves Cys410. Gly492 contributes to the NAD(+) binding site.

Belongs to the urocanase family. NAD(+) is required as a cofactor.

It localises to the cytoplasm. It carries out the reaction 4-imidazolone-5-propanoate = trans-urocanate + H2O. It participates in amino-acid degradation; L-histidine degradation into L-glutamate; N-formimidoyl-L-glutamate from L-histidine: step 2/3. Its function is as follows. Catalyzes the conversion of urocanate to 4-imidazolone-5-propionate. The chain is Urocanate hydratase from Bradyrhizobium diazoefficiens (strain JCM 10833 / BCRC 13528 / IAM 13628 / NBRC 14792 / USDA 110).